A 349-amino-acid chain; its full sequence is Sexual stage-specific protein G37 (349 aa).

A signal peptide spans 1–18 (MKLYLVTFLFFVIYKNKT). Topologically, residues 19-91 (FVDCVTKKQD…INQVSNNIMR (73 aa)) are extracellular. Residues 92–112 (VYISLLSLFLFPYFSYIGIFG) traverse the membrane as a helical segment. At 113–117 (HSRNK) the chain is on the cytoplasmic side. A helical transmembrane segment spans residues 118–138 (ANLTLSSLLAYFALLVSFFLF). Over 139 to 140 (NG) the chain is Extracellular. The chain crosses the membrane as a helical span at residues 141-161 (ILNIGFVTSLPLVVAVLIFIL). The Cytoplasmic segment spans residues 162–176 (GVSDCEINFLYKYTR). Residues 177–197 (YIFCFIISKLIYDVVTYISKD) traverse the membrane as a helical segment. At 198–218 (GANIFDYGFSGHIYMNLLRGK) the chain is on the extracellular side. A helical transmembrane segment spans residues 219–239 (YYIVLKLIHLIILSLISLIII). The Cytoplasmic segment spans residues 240-262 (KICPKIFSNNHLKSPISITFDKY). Residues 263–283 (IISFLCSLPIATAISQVFYLL) form a helical membrane-spanning segment. The Extracellular portion of the chain corresponds to 284 to 305 (SKTINPIDPSIFFMIPSSINFS). A helical transmembrane segment spans residues 306–326 (STGTIFSLSIWILMSYLMTFL). Residues 327–349 (RNKVEADFNNILNKIPNNLPDFI) are Cytoplasmic-facing.

The protein resides in the cell membrane. Involved in the development of male gametocytes. The protein is Sexual stage-specific protein G37 of Plasmodium berghei (strain Anka).